The sequence spans 74 residues: Large ribosomal subunit protein bL31 (74 aa).

It belongs to the bacterial ribosomal protein bL31 family. Type A subfamily. In terms of assembly, part of the 50S ribosomal subunit.

In terms of biological role, binds the 23S rRNA. The protein is Large ribosomal subunit protein bL31 of Chlorobaculum parvum (strain DSM 263 / NCIMB 8327) (Chlorobium vibrioforme subsp. thiosulfatophilum).